Reading from the N-terminus, the 239-residue chain is Ribonuclease PH (239 aa).

Residues R86 and 124-126 (GTR) contribute to the phosphate site.

Belongs to the RNase PH family. As to quaternary structure, homohexameric ring arranged as a trimer of dimers.

The enzyme catalyses tRNA(n+1) + phosphate = tRNA(n) + a ribonucleoside 5'-diphosphate. Functionally, phosphorolytic 3'-5' exoribonuclease that plays an important role in tRNA 3'-end maturation. Removes nucleotide residues following the 3'-CCA terminus of tRNAs; can also add nucleotides to the ends of RNA molecules by using nucleoside diphosphates as substrates, but this may not be physiologically important. Probably plays a role in initiation of 16S rRNA degradation (leading to ribosome degradation) during starvation. The protein is Ribonuclease PH of Cupriavidus taiwanensis (strain DSM 17343 / BCRC 17206 / CCUG 44338 / CIP 107171 / LMG 19424 / R1) (Ralstonia taiwanensis (strain LMG 19424)).